We begin with the raw amino-acid sequence, 224 residues long: Ribonuclease 3 (224 aa).

Residues 5–127 enclose the RNase III domain; it reads LERLCRRLNY…ILAAIYLDGG (123 aa). Glu40 is a Mg(2+) binding site. The active site involves Asp44. The Mg(2+) site is built by Asp113 and Glu116. Residue Glu116 is part of the active site. One can recognise a DRBM domain in the interval 154–224; sequence DAKTQLQEFL…AKAMLEQLQG (71 aa).

This sequence belongs to the ribonuclease III family. Homodimer. The cofactor is Mg(2+).

Its subcellular location is the cytoplasm. The catalysed reaction is Endonucleolytic cleavage to 5'-phosphomonoester.. Its function is as follows. Digests double-stranded RNA. Involved in the processing of primary rRNA transcript to yield the immediate precursors to the large and small rRNAs (23S and 16S). Processes some mRNAs, and tRNAs when they are encoded in the rRNA operon. Processes pre-crRNA and tracrRNA of type II CRISPR loci if present in the organism. This Legionella pneumophila (strain Paris) protein is Ribonuclease 3.